The primary structure comprises 1366 residues: DNA-directed RNA polymerase subunit beta'' (1366 aa).

Residues C220, C291, C298, and C301 each contribute to the Zn(2+) site.

This sequence belongs to the RNA polymerase beta' chain family. RpoC2 subfamily. In terms of assembly, in plastids the minimal PEP RNA polymerase catalytic core is composed of four subunits: alpha, beta, beta', and beta''. When a (nuclear-encoded) sigma factor is associated with the core the holoenzyme is formed, which can initiate transcription. Zn(2+) serves as cofactor.

The protein resides in the plastid. It is found in the chloroplast. The enzyme catalyses RNA(n) + a ribonucleoside 5'-triphosphate = RNA(n+1) + diphosphate. In terms of biological role, DNA-dependent RNA polymerase catalyzes the transcription of DNA into RNA using the four ribonucleoside triphosphates as substrates. This Phaseolus vulgaris (Kidney bean) protein is DNA-directed RNA polymerase subunit beta''.